The following is a 187-amino-acid chain: Putative gamma-glutamylcyclotransferase At3g02910 (187 aa).

17–20 (YGTL) lines the substrate pocket. Glutamate 92 acts as the Proton acceptor in catalysis.

Belongs to the gamma-glutamylcyclotransferase family.

Putative gamma-glutamylcyclotransferase. This chain is Putative gamma-glutamylcyclotransferase At3g02910, found in Arabidopsis thaliana (Mouse-ear cress).